Consider the following 613-residue polypeptide: Ribosome-associated molecular chaperone SSB2 (613 aa).

Residue Ala2 is modified to N-acetylalanine. A nucleotide binding domain (NBD) region spans residues 2 to 391 (AEGVFQGAIG…ILTGQSTSDE (390 aa)). 16 to 18 (TTY) is an ATP binding site. Thr47 is subject to Phosphothreonine. ATP-binding positions include Lys73, 205–207 (GGT), 271–278 (ERAKRTLS), and Gly342. The interval 392-402 (TKDLLLLDVAP) is inter-domain linker. The substrate binding domain (SBD) stretch occupies residues 403–613 (LSLGVGMQGD…RVVTKAMSSR (211 aa)). Positions 428–430 (KRR) match the Contributes to ribosome binding motif. The residue at position 431 (Thr431) is a Phosphothreonine. The segment at 516-612 (SEEIEKMVNQ…KRVVTKAMSS (97 aa)) is lid domain (SBDalpha). The Nuclear export signal signature appears at 574–582 (IEAALSDAL). The interval 601–613 (GLKRVVTKAMSSR) is required for interaction with ribosomes.

Belongs to the heat shock protein 70 family. Ssb-type Hsp70 subfamily. In terms of assembly, binds to ribosomes. Binds close to the ribosomal tunnel exit via contacts with both ribosomal proteins RPL35, RPL39 and RPL19, and rRNA. Directly interacts with nascent polypeptides. This interaction is dependent on the ribosome-associated complex (RAC). Interacts with SSE1.

Its subcellular location is the cytoplasm. The catalysed reaction is ATP + H2O = ADP + phosphate + H(+). Ribosome-bound, Hsp70-type chaperone that assists in the cotranslational folding of newly synthesized proteins in the cytosol. Stimulates folding by interacting with nascent chains, binding to short, largely hydrophobic sequences exposed by unfolded proteins, thereby stabilizing longer, more slowly translated, and aggregation-prone nascent polypeptides and domains that cannot fold stably until fully synthesized. The Hsp70-protein substrate interaction depends on ATP-binding and on allosteric regulation between the NBD and the SBD. The ATP-bound state is characterized by a fast exchange rate of substrate (low affinity state), while in the ADP-bound state exchange is much slower (high affinity state). During the Hsp70 cycle, the chaperone switches between the ATP-bound state (open conformation) and the ADP-bound state (closed conformation) by major conformational rearrangements involving mainly the lid domain. Ssb cooperates with a specific Hsp40/Hsp70 co-chaperone termed the ribosome-associated complex (RAC), which stimulates the ATPase activity of the ribosome-associated pool of Ssbs and switches it to the high affinity substrate binding state. Hsp110 chaperone SSE1 and FES1 act as nucleotide exchange factors that cause substrate release. The polypeptide is Ribosome-associated molecular chaperone SSB2 (Saccharomyces cerevisiae (strain ATCC 204508 / S288c) (Baker's yeast)).